A 369-amino-acid chain; its full sequence is Phosphoribosyl pyrophosphate synthase-associated protein 2 (369 aa).

An N-acetylmethionine modification is found at Met-1. Residues Ser-219, Ser-227, and Ser-233 each carry the phosphoserine modification.

This sequence belongs to the ribose-phosphate pyrophosphokinase family. In terms of assembly, binds to PRPS1 and PRPS2.

Functionally, seems to play a negative regulatory role in 5-phosphoribose 1-diphosphate synthesis. The protein is Phosphoribosyl pyrophosphate synthase-associated protein 2 (PRPSAP2) of Bos taurus (Bovine).